We begin with the raw amino-acid sequence, 1002 residues long: Solute carrier family 12 member 3 (1002 aa).

Residues methionine 1 to glycine 135 are Cytoplasmic-facing. At serine 41 the chain carries Phosphoserine. A Phosphothreonine modification is found at threonine 44. Phosphoserine is present on serine 47. Phosphothreonine is present on residues threonine 48, threonine 53, and threonine 58. Phosphoserine occurs at positions 71 and 89. A Phosphothreonine modification is found at threonine 122. Serine 124 is subject to Phosphoserine. A discontinuously helical membrane pass occupies residues tryptophan 136–glycine 165. Na(+)-binding residues include leucine 146 and tryptophan 149. A helical transmembrane segment spans residues isoleucine 166–isoleucine 187. The Cytoplasmic segment spans residues serine 188–glycine 218. Residues leucine 219–arginine 241 traverse the membrane as a helical segment. The Extracellular segment spans residues aspartate 242 to aspartate 253. 2 helical membrane passes run proline 254–glutamate 278 and tryptophan 279–glycine 301. Over threonine 302–glycine 336 the chain is Extracellular. Residues serine 337–isoleucine 358 traverse the membrane as a discontinuously helical segment. Glycine 351, isoleucine 352, and leucine 353 together coordinate chloride. Over serine 359–isoleucine 369 the chain is Cytoplasmic. The chain crosses the membrane as a helical span at residues proline 370 to isoleucine 391. At glycine 392–phenylalanine 451 the chain is on the extracellular side. Asparagine 404 carries N-linked (GlcNAc...) asparagine glycosylation. A disulfide bond links cysteine 414 and cysteine 419. Residue asparagine 424 is glycosylated (N-linked (GlcNAc...) asparagine). The cysteines at positions 428 and 434 are disulfide-linked. A helical membrane pass occupies residues alanine 452–alanine 475. 3 residues coordinate Na(+): alanine 462, serine 465, and serine 466. At lysine 476 to arginine 505 the chain is on the cytoplasmic side. The helical transmembrane segment at glycine 506 to isoleucine 520 threads the bilayer. At alanine 521–threonine 525 the chain is on the extracellular side. A helical transmembrane segment spans residues isoleucine 526–asparagine 542. Tyrosine 538 contributes to the chloride binding site. Topologically, residues phenylalanine 543–lysine 565 are cytoplasmic. 2 consecutive transmembrane segments (helical) span residues tryptophan 566–tryptophan 585 and alanine 586–leucine 597. The Cytoplasmic segment spans residues leucine 598–glutamine 1002. The segment at serine 613 to glycine 628 is scissor helix. Positions 646, 653, 675, 739, 778, and 779 each coordinate ATP.

The protein belongs to the SLC12A transporter family. In terms of assembly, homodimer; adopts a domain-swap conformation at the scissor helices connecting the transmembrane domain and C-terminal domain. Interacts with KLHL3. Interacts with IL18R1; this interaction is increased by IL18 treatment. In terms of processing, ubiquitinated; ubiquitination is essential for regulation of endocytosis. Post-translationally, phosphorylated at Thr-53, Thr-58 and Ser-71 by OXSR1/OSR1 and STK39/SPAK downstream of WNK4, promoting its activity. Phosphorylated in response to IL18. As to expression, expressed predominantly in kidney, including in distal tubules (at protein level). Detected at low levels in heart, lung and liver. Not detected in normal aorta, but abundantly expressed in fatty streaks and advanced atherosclerotic lesions. In atherosclerotic lesions, expressed in macrophages, smooth muscle cells and endothelial cells (at protein level).

It is found in the cell membrane. It localises to the apical cell membrane. The enzyme catalyses chloride(out) + Na(+)(out) = chloride(in) + Na(+)(in). Phosphorylation by OXSR1/OSR1 and STK39/SPAK in kidney distal convoluted tubules promotes its activity. Also activated by OXSR1/OSR1 and STK39/SPAK downstream of WNK3. Inhibited by thiazide-type diuretic metolazone. Thiazide drugs, such as polythiazide, specifically inhibit SLC12A3/NCC transporter activity by competing with chloride for binding. In terms of biological role, electroneutral sodium and chloride ion cotransporter, which acts as a key mediator of sodium and chloride reabsorption in kidney distal convoluted tubules. Also acts as a receptor for the pro-inflammatory cytokine IL18, thereby contributing to IL18-induced cytokine production, including IFNG, IL6, IL18 and CCL2. May act either independently of IL18R1, or in a complex with IL18R1. The chain is Solute carrier family 12 member 3 from Mus musculus (Mouse).